Here is a 1012-residue protein sequence, read N- to C-terminus: Alanine--tRNA ligase, mitochondrial (1012 aa).

Residues 1-24 (MYNSAKQLQRVLTAREIRKTFLDH) constitute a mitochondrion transit peptide. Residues H656, H660, C766, and H770 each coordinate Zn(2+).

The protein belongs to the class-II aminoacyl-tRNA synthetase family. As to quaternary structure, monomer. Requires Zn(2+) as cofactor.

The protein resides in the mitochondrion. It catalyses the reaction tRNA(Ala) + L-alanine + ATP = L-alanyl-tRNA(Ala) + AMP + diphosphate. In terms of biological role, catalyzes the attachment of alanine to tRNA(Ala) in a two-step reaction: alanine is first activated by ATP to form Ala-AMP and then transferred to the acceptor end of tRNA(Ala). Also edits incorrectly charged tRNA(Ala) via its editing domain. The chain is Alanine--tRNA ligase, mitochondrial from Drosophila melanogaster (Fruit fly).